Reading from the N-terminus, the 883-residue chain is Alanine--tRNA ligase (883 aa).

Positions 564, 568, 666, and 670 each coordinate Zn(2+).

This sequence belongs to the class-II aminoacyl-tRNA synthetase family. It depends on Zn(2+) as a cofactor.

Its subcellular location is the cytoplasm. The enzyme catalyses tRNA(Ala) + L-alanine + ATP = L-alanyl-tRNA(Ala) + AMP + diphosphate. Its function is as follows. Catalyzes the attachment of alanine to tRNA(Ala) in a two-step reaction: alanine is first activated by ATP to form Ala-AMP and then transferred to the acceptor end of tRNA(Ala). Also edits incorrectly charged Ser-tRNA(Ala) and Gly-tRNA(Ala) via its editing domain. The sequence is that of Alanine--tRNA ligase from Synechococcus sp. (strain JA-3-3Ab) (Cyanobacteria bacterium Yellowstone A-Prime).